The chain runs to 345 residues: S-adenosylmethionine:tRNA ribosyltransferase-isomerase (345 aa).

This sequence belongs to the QueA family. In terms of assembly, monomer.

The protein localises to the cytoplasm. It catalyses the reaction 7-aminomethyl-7-carbaguanosine(34) in tRNA + S-adenosyl-L-methionine = epoxyqueuosine(34) in tRNA + adenine + L-methionine + 2 H(+). The protein operates within tRNA modification; tRNA-queuosine biosynthesis. Its function is as follows. Transfers and isomerizes the ribose moiety from AdoMet to the 7-aminomethyl group of 7-deazaguanine (preQ1-tRNA) to give epoxyqueuosine (oQ-tRNA). The sequence is that of S-adenosylmethionine:tRNA ribosyltransferase-isomerase from Rhodospirillum rubrum (strain ATCC 11170 / ATH 1.1.1 / DSM 467 / LMG 4362 / NCIMB 8255 / S1).